Here is a 394-residue protein sequence, read N- to C-terminus: Putative gustatory receptor 22a (394 aa).

Residues 1–16 (MSQPKRIHRICKGLAR) are Cytoplasmic-facing. The helical transmembrane segment at 17–37 (FTIRATLYGSWVLGLFPFTFD) threads the bilayer. Topologically, residues 38-47 (SRKRRLNRSK) are extracellular. The N-linked (GlcNAc...) asparagine glycan is linked to Asn-44. Residues 48–68 (WLLAYGLVLNLTLLVLSMLPS) form a helical membrane-spanning segment. Residues 69–148 (TDDHNSVKVE…HTFNRYVIEK (80 aa)) lie on the Cytoplasmic side of the membrane. A helical transmembrane segment spans residues 149–169 (GLVIILEIGSSLVLYFGIPNS). Position 170 (Lys-170) is a topological domain, extracellular. A helical transmembrane segment spans residues 171–191 (IVVYEAVCIYIVQLEVLMVVM). The Cytoplasmic segment spans residues 192–256 (HFHLAVIYIY…TAIYDIQVTL (65 aa)). Residues 257–277 (FMATLFSVNIIVGHVLVICWI) traverse the membrane as a helical segment. Residue Asn-278 is glycosylated (N-linked (GlcNAc...) asparagine). Topologically, residues 278-281 (NITR) are extracellular. A helical transmembrane segment spans residues 282–302 (FSLLVIFLLFPQALIINFWDL). Residues 303–361 (WQGIAFCDLAESTGKKTSMILKLFNDMENMDQETERRVTEFTLFCSHRRLKVCHLGLLD) are Cytoplasmic-facing. The chain crosses the membrane as a helical span at residues 362 to 382 (INYEMGFRMIITNILYVVFLV). Residues 383-394 (QFDYMNLKFKTD) are Extracellular-facing.

Belongs to the insect chemoreceptor superfamily. Gustatory receptor (GR) family. Gr22e subfamily. As to expression, expressed in neurons of the terminal external chemosensory organ of larvae.

Its subcellular location is the cell membrane. Probable gustatory receptor which mediates acceptance or avoidance behavior, depending on its substrates. This is Putative gustatory receptor 22a (Gr22a) from Drosophila melanogaster (Fruit fly).